A 452-amino-acid polypeptide reads, in one-letter code: Phosphatidate cytidylyltransferase, mitochondrial (452 aa).

Belongs to the TAM41 family. Mg(2+) serves as cofactor.

The protein localises to the mitochondrion inner membrane. It catalyses the reaction a 1,2-diacyl-sn-glycero-3-phosphate + CTP + H(+) = a CDP-1,2-diacyl-sn-glycerol + diphosphate. Its pathway is phospholipid metabolism; CDP-diacylglycerol biosynthesis; CDP-diacylglycerol from sn-glycerol 3-phosphate: step 3/3. In terms of biological role, catalyzes the conversion of phosphatidic acid (PA) to CDP-diacylglycerol (CDP-DAG), an essential intermediate in the synthesis of phosphatidylglycerol, cardiolipin and phosphatidylinositol. The sequence is that of Phosphatidate cytidylyltransferase, mitochondrial (TAMM41) from Homo sapiens (Human).